Reading from the N-terminus, the 104-residue chain is uncharacterized protein (104 aa).

The protein to A.aeolicus AQ_377.

This is an uncharacterized protein from Archaeoglobus fulgidus (strain ATCC 49558 / DSM 4304 / JCM 9628 / NBRC 100126 / VC-16).